A 195-amino-acid polypeptide reads, in one-letter code: Thymidine kinase (195 aa).

ATP contacts are provided by residues 15–22 and 88–91; these read GSMFSGKS and DEVQ. E89 (proton acceptor) is an active-site residue. F120 provides a ligand contact to substrate. Residues C145 and C148 each contribute to the Zn(2+) site. Substrate contacts are provided by residues 170–174 and Y179; that span reads IILVG. Residues C183 and C186 each coordinate Zn(2+).

Belongs to the thymidine kinase family. Homotetramer.

It localises to the cytoplasm. It carries out the reaction thymidine + ATP = dTMP + ADP + H(+). The sequence is that of Thymidine kinase from Bacillus cereus (strain ATCC 14579 / DSM 31 / CCUG 7414 / JCM 2152 / NBRC 15305 / NCIMB 9373 / NCTC 2599 / NRRL B-3711).